The sequence spans 418 residues: tRNA wybutosine-synthesizing protein 2 (418 aa).

Residues serine 228, lysine 235, 275-276 (EI), and 302-303 (EN) each bind S-adenosyl-L-methionine.

It belongs to the class I-like SAM-binding methyltransferase superfamily. TRM5/TYW2 family.

It localises to the cytoplasm. Its subcellular location is the nucleus. It catalyses the reaction 4-demethylwyosine(37) in tRNA(Phe) + S-adenosyl-L-methionine = 4-demethyl-7-[(3S)-3-amino-3-carboxypropyl]wyosine(37) in tRNA(Phe) + S-methyl-5'-thioadenosine + H(+). It participates in tRNA modification; wybutosine-tRNA(Phe) biosynthesis. Functionally, S-adenosyl-L-methionine-dependent transferase that acts as a component of the wybutosine biosynthesis pathway. Wybutosine is a hyper modified guanosine with a tricyclic base found at the 3'-position adjacent to the anticodon of eukaryotic phenylalanine tRNA. Catalyzes the transfer of the alpha-amino-alpha-carboxypropyl (acp) group from S-adenosyl-L-methionine to the C-7 position of 4-demethylwyosine (imG-14) to produce wybutosine-86. This is tRNA wybutosine-synthesizing protein 2 (trm12) from Schizosaccharomyces pombe (strain 972 / ATCC 24843) (Fission yeast).